A 336-amino-acid chain; its full sequence is Phosphoribosylformylglycinamidine cyclo-ligase (336 aa).

The protein belongs to the AIR synthase family.

It is found in the cytoplasm. It catalyses the reaction 2-formamido-N(1)-(5-O-phospho-beta-D-ribosyl)acetamidine + ATP = 5-amino-1-(5-phospho-beta-D-ribosyl)imidazole + ADP + phosphate + H(+). It functions in the pathway purine metabolism; IMP biosynthesis via de novo pathway; 5-amino-1-(5-phospho-D-ribosyl)imidazole from N(2)-formyl-N(1)-(5-phospho-D-ribosyl)glycinamide: step 2/2. The protein is Phosphoribosylformylglycinamidine cyclo-ligase of Thermoanaerobacter sp. (strain X514).